Reading from the N-terminus, the 287-residue chain is D-alanine--D-alanine ligase (287 aa).

Residues 98–283 (KTKQIAQSVG…FDDVVRITVE (186 aa)) form the ATP-grasp domain. Residue 124 to 169 (PVIIKPVDEGSSKGLFLCNNKEEAEEAVKKLAKPIIEDYIIGEELT) participates in ATP binding. Mg(2+)-binding residues include aspartate 238, glutamate 250, and asparagine 252.

The protein belongs to the D-alanine--D-alanine ligase family. Mg(2+) is required as a cofactor. It depends on Mn(2+) as a cofactor.

It localises to the cytoplasm. It carries out the reaction 2 D-alanine + ATP = D-alanyl-D-alanine + ADP + phosphate + H(+). It functions in the pathway cell wall biogenesis; peptidoglycan biosynthesis. Cell wall formation. This is D-alanine--D-alanine ligase from Fusobacterium nucleatum subsp. nucleatum (strain ATCC 25586 / DSM 15643 / BCRC 10681 / CIP 101130 / JCM 8532 / KCTC 2640 / LMG 13131 / VPI 4355).